The sequence spans 104 residues: Probable RNA-binding protein PA4753 (104 aa).

Residues 1–97 (MALTQEQKKQ…NPKPNKNLSN (97 aa)) enclose the CRM domain.

The chain is Probable RNA-binding protein PA4753 from Pseudomonas aeruginosa (strain ATCC 15692 / DSM 22644 / CIP 104116 / JCM 14847 / LMG 12228 / 1C / PRS 101 / PAO1).